The chain runs to 381 residues: Homoserine O-succinyltransferase (381 aa).

Positions 45 to 360 (NAVLVCHALN…PHGHDAFLLD (316 aa)) constitute an AB hydrolase-1 domain. Ser151 (nucleophile) is an active-site residue. Substrate is bound at residue Arg221. Residues Asp321 and His354 contribute to the active site. Position 355 (Asp355) interacts with substrate.

This sequence belongs to the AB hydrolase superfamily. MetX family. As to quaternary structure, homodimer.

The protein resides in the cytoplasm. The catalysed reaction is L-homoserine + succinyl-CoA = O-succinyl-L-homoserine + CoA. Its pathway is amino-acid biosynthesis; L-methionine biosynthesis via de novo pathway; O-succinyl-L-homoserine from L-homoserine: step 1/1. Functionally, transfers a succinyl group from succinyl-CoA to L-homoserine, forming succinyl-L-homoserine. This Burkholderia ambifaria (strain ATCC BAA-244 / DSM 16087 / CCUG 44356 / LMG 19182 / AMMD) (Burkholderia cepacia (strain AMMD)) protein is Homoserine O-succinyltransferase.